A 461-amino-acid chain; its full sequence is GTPase Der (461 aa).

2 EngA-type G domains span residues 2–164 (QKII…EDDV) and 197–368 (IRVG…KNFT). Residues 8-15 (GKPNVGKS), 55-59 (DSGGL), 116-119 (NKID), 203-210 (GRVNVGKS), 250-254 (DTAGI), and 314-317 (NKWD) contribute to the GTP site. Residues 369–453 (QKIQTSKLNE…PIVLAPKKRG (85 aa)) enclose the KH-like domain.

It belongs to the TRAFAC class TrmE-Era-EngA-EngB-Septin-like GTPase superfamily. EngA (Der) GTPase family. As to quaternary structure, associates with the 50S ribosomal subunit.

In terms of biological role, GTPase that plays an essential role in the late steps of ribosome biogenesis. This chain is GTPase Der, found in Campylobacter curvus (strain 525.92).